A 377-amino-acid polypeptide reads, in one-letter code: Nucleoside diphosphate kinase homolog 7 (377 aa).

The DM10 domain occupies 3–91 (HSERFVFIAE…YTARQLGSKK (89 aa)).

The protein belongs to the NDK family. In terms of assembly, component of sperm flagellar doublet microtubules. Component of the gamma-tubulin ring complex. As to expression, expressed in trachea multiciliated cells.

It is found in the cytoplasm. The protein localises to the cytoskeleton. It localises to the microtubule organizing center. The protein resides in the centrosome. Its subcellular location is the nucleus. It is found in the spindle. The protein localises to the cilium axoneme. It localises to the flagellum axoneme. The protein resides in the cell projection. Its subcellular location is the cilium. Possesses an intrinsic kinase activity. Displays 3'-5' exonuclease activity with a preference for single-stranded DNA. Does not seem to have nucleoside diphosphate kinase activity. Functional component of the gamma-tubulin ring complex, implicated in the regulation of the microtubule-nucleating activity of the gamma-tubulin ring complex in centrosomes, in a kinase activity-dependent manner. Part of the dynein-decorated doublet microtubules (DMTs) in cilia axoneme, which is required for motile cilia beating. This chain is Nucleoside diphosphate kinase homolog 7 (NME7), found in Bos taurus (Bovine).